The following is a 658-amino-acid chain: Endoglin (658 aa).

The first 25 residues, 1–25 (MDRGTLPLAVALLLASCSLSPTSLA), serve as a signal peptide directing secretion. The OR1, N-terminal part stretch occupies residues 26-46 (ETVHCDLQPVGPERGEVTYTT). Residues 26–337 (ETVHCDLQPV…SSCGGRLQTS (312 aa)) form a required for interaction with GDF2 region. Topologically, residues 26 to 586 (ETVHCDLQPV…PDLSGCTSKG (561 aa)) are extracellular. Disulfide bonds link Cys-30/Cys-207, Cys-53/Cys-182, Cys-242/Cys-330, Cys-350/Cys-382, Cys-363/Cys-442, Cys-394/Cys-412, and Cys-493/Cys-549. Residues 47–199 (SQVSKGCVAQ…MGRTLEWRPR (153 aa)) are OR2. N-linked (GlcNAc...) asparagine glycosylation is found at Asn-88, Asn-102, Asn-121, and Asn-134. Residues 200 to 330 (TPALVRGCHL…SIVSLHASSC (131 aa)) form an OR1, C-terminal part region. Positions 270–282 (QIWTTGEYSFKIF) are essential for interaction with GDF2. Asn-307 carries N-linked (GlcNAc...) asparagine glycosylation. The ZP domain occupies 363-533 (CADDAMTLVL…PEGDPRFSFL (171 aa)). The Cell attachment site signature appears at 399-401 (RGD). Residues 587–611 (LVLPAVLGITFGAFLIGALLTAALW) traverse the membrane as a helical segment. The Cytoplasmic segment spans residues 612–658 (YIYSHTRSPSKREPVVAVAAPASSESSSTNHSIGSTQSTPCSTSSMA). The segment covering 626–639 (VVAVAAPASSESSS) has biased composition (low complexity). Residues 626–658 (VVAVAAPASSESSSTNHSIGSTQSTPCSTSSMA) form a disordered region. The segment covering 640-658 (TNHSIGSTQSTPCSTSSMA) has biased composition (polar residues). Ser-646 and Ser-649 each carry phosphoserine; by TGFBR1.

In terms of assembly, homodimer; disulfide-linked. Forms a heteromeric complex with the signaling receptors for transforming growth factor-beta: TGFBR1 and/or TGFBR2. It is able to bind TGFB1 and TGFB2 with high affinity, but not TGFB3. Interacts with GDF2, forming a heterotetramer with a 2:2 stoichiometry. Interacts with ACVRL1. Can form a heteromeric complex with GDF2 and ACVRL1. Interacts with BMP10. Interacts with DYNLT4. Interacts with ARRB2. In terms of tissue distribution, detected on umbilical veil endothelial cells. Detected in placenta (at protein level). Detected on endothelial cells.

The protein resides in the cell membrane. In terms of biological role, vascular endothelium glycoprotein that plays an important role in the regulation of angiogenesis. Required for normal structure and integrity of adult vasculature. Regulates the migration of vascular endothelial cells. Required for normal extraembryonic angiogenesis and for embryonic heart development. May regulate endothelial cell shape changes in response to blood flow, which drive vascular remodeling and establishment of normal vascular morphology during angiogenesis. May play a critical role in the binding of endothelial cells to integrins and/or other RGD receptors. Acts as a TGF-beta coreceptor and is involved in the TGF-beta/BMP signaling cascade that ultimately leads to the activation of SMAD transcription factors. Required for GDF2/BMP9 signaling through SMAD1 in endothelial cells and modulates TGFB1 signaling through SMAD3. The sequence is that of Endoglin (ENG) from Homo sapiens (Human).